The chain runs to 133 residues: Glycophorin-A (133 aa).

O-linked (GalNAc...) threonine glycans are attached at residues T1 and T6. Positions 1 to 34 are disordered; sequence TETPVTGEQGSATPGNVSNATVTAGKPSATSPGV. Topologically, residues 1 to 62 are extracellular; it reads TETPVTGEQG…SYHQDFSHAE (62 aa). S11 carries an O-linked (GalNAc...) serine glycan. A glycan (O-linked (GalNAc...) threonine) is linked at T13. Residue N19 is glycosylated (N-linked (GlcNAc...) asparagine). T21, T23, and T30 each carry an O-linked (GalNAc...) threonine glycan. O-linked (GalNAc...) serine glycosylation is present at S31. An N-linked (GlcNAc...) asparagine glycan is attached at N39. 2 O-linked (GalNAc...) threonine glycosylation sites follow: T41 and T48. Residues 63 to 85 traverse the membrane as a helical segment; sequence ITGIIFAVMAGLLLIIFLIAYLI. The Cytoplasmic segment spans residues 86–133; that stretch reads RRMIKKPLPVPKPQDSPDIGTENTADPSELQDTEDPPLTSVEIETPAS. A disordered region spans residues 93 to 133; sequence LPVPKPQDSPDIGTENTADPSELQDTEDPPLTSVEIETPAS.

It belongs to the glycophorin-A family. As to quaternary structure, homodimer. Component of the ankyrin-1 complex in the erythrocyte, composed of ANK1, RHCE, RHAG, SLC4A1, EPB42, GYPA, GYPB and AQP1. Interacts with SLC4A1; a GYPA monomer is bound at each end of the SLC4A1 dimer forming a heterotetramer.

It localises to the membrane. Component of the ankyrin-1 complex, a multiprotein complex involved in the stability and shape of the erythrocyte membrane. Glycophorin A is the major intrinsic membrane protein of the erythrocyte. The N-terminal glycosylated segment, which lies outside the erythrocyte membrane, has MN blood group receptors. Appears to be important for the function of SLC4A1 and is required for high activity of SLC4A1. May be involved in translocation of SLC4A1 to the plasma membrane. The sequence is that of Glycophorin-A from Sus scrofa (Pig).